A 223-amino-acid chain; its full sequence is Phosphoribosylformylglycinamidine synthase subunit PurQ (223 aa).

The Glutamine amidotransferase type-1 domain occupies 3 to 223 (SAVILLPGLN…LFAGALGITA (221 aa)). Catalysis depends on C87, which acts as the Nucleophile. Catalysis depends on residues H197 and E199.

Part of the FGAM synthase complex composed of 1 PurL, 1 PurQ and 2 PurS subunits.

Its subcellular location is the cytoplasm. The catalysed reaction is N(2)-formyl-N(1)-(5-phospho-beta-D-ribosyl)glycinamide + L-glutamine + ATP + H2O = 2-formamido-N(1)-(5-O-phospho-beta-D-ribosyl)acetamidine + L-glutamate + ADP + phosphate + H(+). It carries out the reaction L-glutamine + H2O = L-glutamate + NH4(+). Its pathway is purine metabolism; IMP biosynthesis via de novo pathway; 5-amino-1-(5-phospho-D-ribosyl)imidazole from N(2)-formyl-N(1)-(5-phospho-D-ribosyl)glycinamide: step 1/2. Its function is as follows. Part of the phosphoribosylformylglycinamidine synthase complex involved in the purines biosynthetic pathway. Catalyzes the ATP-dependent conversion of formylglycinamide ribonucleotide (FGAR) and glutamine to yield formylglycinamidine ribonucleotide (FGAM) and glutamate. The FGAM synthase complex is composed of three subunits. PurQ produces an ammonia molecule by converting glutamine to glutamate. PurL transfers the ammonia molecule to FGAR to form FGAM in an ATP-dependent manner. PurS interacts with PurQ and PurL and is thought to assist in the transfer of the ammonia molecule from PurQ to PurL. This chain is Phosphoribosylformylglycinamidine synthase subunit PurQ, found in Brucella abortus biovar 1 (strain 9-941).